The sequence spans 362 residues: 3-isopropylmalate dehydrogenase (362 aa).

75–88 (GPKWANLPPTEQPE) provides a ligand contact to NAD(+). Residues Arg-96, Arg-106, Arg-135, and Asp-224 each coordinate substrate. Mg(2+)-binding residues include Asp-224, Asp-248, and Asp-252. 282–294 (GSAPDIAGLGVAN) lines the NAD(+) pocket.

This sequence belongs to the isocitrate and isopropylmalate dehydrogenases family. LeuB type 1 subfamily. In terms of assembly, homodimer. Mg(2+) serves as cofactor. It depends on Mn(2+) as a cofactor.

It localises to the cytoplasm. The catalysed reaction is (2R,3S)-3-isopropylmalate + NAD(+) = 4-methyl-2-oxopentanoate + CO2 + NADH. The protein operates within amino-acid biosynthesis; L-leucine biosynthesis; L-leucine from 3-methyl-2-oxobutanoate: step 3/4. Catalyzes the oxidation of 3-carboxy-2-hydroxy-4-methylpentanoate (3-isopropylmalate) to 3-carboxy-4-methyl-2-oxopentanoate. The product decarboxylates to 4-methyl-2 oxopentanoate. The polypeptide is 3-isopropylmalate dehydrogenase (Colwellia psychrerythraea (strain 34H / ATCC BAA-681) (Vibrio psychroerythus)).